The following is a 200-amino-acid chain: Eukaryotic translation initiation factor isoform 4E (200 aa).

The segment at 1–22 is disordered; that stretch reads MATEAPIEATEVPPASATETVA. Residues 44–49, Lys-76, and 94–95 each bind mRNA; these read QGAAWG and WE. A disulfide bond links Cys-99 and Cys-138. MRNA-binding positions include 145–150 and 189–192; these read RRSQDK and KRER.

It belongs to the eukaryotic initiation factor 4E family. EIF4F is a multi-subunit complex, the composition of which varies with external and internal environmental conditions. It is composed of at least EIF4A, EIF4E and EIF4G. EIF4E is also known to interact with other partners. In higher plants two isoforms of EIF4F have been identified, named isoform EIF4F and isoform EIF(iso)4F. Isoform EIF4F has subunits p220 and p26, whereas isoform EIF(iso)4F has subunits p82 and p28. In terms of assembly, (Microbial infection) Interacts with viral genome-linked protein (VPg); this interaction is possible in susceptible hosts but impaired in resistant plants. According to the redox status, the Cys-99-Cys-138 disulfide bridge may have a role in regulating protein function by affecting its ability to bind capped mRNA. Expressed ubiquitously in seedlings, roots, leaves, sepals, petals, anthers and dehisced pollen, with highest levels in pollen, maturing anthers and roots. Strongly expressed in susceptible plants but not in resistant ones.

It localises to the cytoplasm. Its subcellular location is the nucleus. Functionally, component of the protein complex eIF4F, which is involved in the recognition of the mRNA cap, ATP-dependent unwinding of 5'-terminal secondary structure and recruitment of mRNA to the ribosome. Recognizes and binds the 7-methylguanosine-containing mRNA cap during an early step in the initiation of protein synthesis and facilitates ribosome binding by inducing the unwinding of the mRNAs secondary structures. Key component of recessive resistance to potyviruses. In terms of biological role, (Microbial infection) Susceptibility host factor required for viral infection (e.g. potato virus Y (PVY) and pepper mottle virus (PepMoV)) by recruiting viral RNAs to the host ribosomal complex via an interaction with viral genome-linked protein (VPg). The chain is Eukaryotic translation initiation factor isoform 4E from Nicotiana tabacum (Common tobacco).